A 915-amino-acid polypeptide reads, in one-letter code: MIRRIQPRCNSGLTGSVSAFEVLKKKFSTDVTVPSPVTRRQFCSVSPLLRNLPEEESDSMSVPHRLLSILSKPNWHKSPSLKSMVSAISPSHVSSLFSLDLDPKTALNFSHWISQNPRYKHSVYSYASLLTLLINNGYVGVVFKIRLLMIKSCDSVGDALYVLDLCRKMNKDERFELKYKLIIGCYNTLLNSLARFGLVDEMKQVYMEMLEDKVCPNIYTYNKMVNGYCKLGNVEEANQYVSKIVEAGLDPDFFTYTSLIMGYCQRKDLDSAFKVFNEMPLKGCRRNEVAYTHLIHGLCVARRIDEAMDLFVKMKDDECFPTVRTYTVLIKSLCGSERKSEALNLVKEMEETGIKPNIHTYTVLIDSLCSQCKFEKARELLGQMLEKGLMPNVITYNALINGYCKRGMIEDAVDVVELMESRKLSPNTRTYNELIKGYCKSNVHKAMGVLNKMLERKVLPDVVTYNSLIDGQCRSGNFDSAYRLLSLMNDRGLVPDQWTYTSMIDSLCKSKRVEEACDLFDSLEQKGVNPNVVMYTALIDGYCKAGKVDEAHLMLEKMLSKNCLPNSLTFNALIHGLCADGKLKEATLLEEKMVKIGLQPTVSTDTILIHRLLKDGDFDHAYSRFQQMLSSGTKPDAHTYTTFIQTYCREGRLLDAEDMMAKMRENGVSPDLFTYSSLIKGYGDLGQTNFAFDVLKRMRDTGCEPSQHTFLSLIKHLLEMKYGKQKGSEPELCAMSNMMEFDTVVELLEKMVEHSVTPNAKSYEKLILGICEVGNLRVAEKVFDHMQRNEGISPSELVFNALLSCCCKLKKHNEAAKVVDDMICVGHLPQLESCKVLICGLYKKGEKERGTSVFQNLLQCGYYEDELAWKIIIDGVGKQGLVEAFYELFNVMEKNGCKFSSQTYSLLIEGPPDST.

PPR repeat units lie at residues 182 to 216 (IIGC…KVCP), 217 to 251 (NIYT…GLDP), 252 to 286 (DFFT…GCRR), 287 to 321 (NEVA…ECFP), 322 to 356 (TVRT…GIKP), 357 to 391 (NIHT…GLMP), 392 to 426 (NVIT…KLSP), 427 to 460 (NTRT…KVLP), 461 to 495 (DVVT…GLVP), 496 to 530 (DQWT…GVNP), 531 to 565 (NVVM…NCLP), 566 to 600 (NSLT…GLQP), 601 to 635 (TVST…GTKP), 636 to 670 (DAHT…GVSP), 671 to 705 (DLFT…GCEP), 724 to 758 (KQKG…SVTP), 759 to 794 (NAKS…GISP), 795 to 829 (SELV…GHLP), 830 to 864 (QLES…GYYE), and 865 to 899 (DELA…GCKF).

This sequence belongs to the PPR family. P subfamily.

The polypeptide is Pentatricopeptide repeat-containing protein At5g65560 (Arabidopsis thaliana (Mouse-ear cress)).